The following is a 314-amino-acid chain: Probable RuBisCO transcriptional regulator (314 aa).

An HTH lysR-type domain is found at 6–63; sequence FTLDQLKIIKTIHREGSFKTAAKKLYISQPAVSRQVQNLERQLNTPIFYRDKRKARLT. The segment at residues 23–42 is a DNA-binding region (H-T-H motif); that stretch reads FKTAAKKLYISQPAVSRQVQ.

This sequence belongs to the LysR transcriptional regulatory family.

It is found in the plastid. It localises to the chloroplast. In terms of biological role, trans-acting transcriptional regulator of RuBisCO genes (rbcL and rbcS) expression. The chain is Probable RuBisCO transcriptional regulator (rbcR) from Emiliania huxleyi (Coccolithophore).